We begin with the raw amino-acid sequence, 339 residues long: Heat-inducible transcription repressor HrcA (339 aa).

This sequence belongs to the HrcA family.

In terms of biological role, negative regulator of class I heat shock genes (grpE-dnaK-dnaJ and groELS operons). Prevents heat-shock induction of these operons. The polypeptide is Heat-inducible transcription repressor HrcA (Clostridium perfringens (strain 13 / Type A)).